The following is an 875-amino-acid chain: Lysine-specific demethylase 7A (875 aa).

Residues 5 to 56 form a PHD-type zinc finger; sequence PLYCVCRQPYDVNRFMIECDICKDWFHGSCVQVVEHHAADIDVYHCPNCEPI. A JmjC domain is found at 197–353; the sequence is FSDTRMSNLV…MQLRCYEMER (157 aa). Thr-246 serves as a coordination point for substrate. The Fe cation site is built by His-249 and Asp-251. Lys-266 is a substrate binding site. Residue His-321 participates in Fe cation binding. Disordered regions lie at residues 442-506, 629-710, and 742-820; these read EDDS…SRKL, SQGE…NTDC, and QGNG…ATAK. A compositionally biased stretch (polar residues) spans 448 to 462; that stretch reads AVKTQGSAECSLSRS. Basic residues predominate over residues 478–505; it reads QDHHHHRRRHHHHHHHHHHHHHHHHSRK. Residues 650–663 are compositionally biased toward basic and acidic residues; the sequence is SDSKAGDSAEKCSL. Residues 688–697 show a composition bias toward basic residues; that stretch reads SHRHSHHKQA. The segment covering 742–762 has biased composition (low complexity); that stretch reads QGNGSSTSSSSDMWDSSEPCS.

This sequence belongs to the JHDM1 histone demethylase family. JHDM1D subfamily. Requires Fe(2+) as cofactor. In terms of tissue distribution, predominantly expressed in brain.

It localises to the nucleus. Histone demethylase required for brain development. Specifically demethylates dimethylated 'Lys-9' and 'Lys-27' (H3K9me2 and H3K27me2, respectively) of histone H3 and monomethylated histone H4 'Lys-20' residue (H4K20Me1), thereby playing a central role in histone code. In Danio rerio (Zebrafish), this protein is Lysine-specific demethylase 7A (kdm7a).